A 379-amino-acid chain; its full sequence is Epoxyqueuosine reductase (379 aa).

The Proton donor role is filled by Asp-139. In terms of domain architecture, 4Fe-4S ferredoxin-type spans 181–213 (IPLPVDQPVEEGCGKCVACMTICPTGAIVEPYT). Residues Cys-193, Cys-196, Cys-199, Cys-203, Cys-219, Cys-246, Cys-249, and Cys-253 each coordinate [4Fe-4S] cluster.

This sequence belongs to the QueG family. As to quaternary structure, monomer. Cob(II)alamin serves as cofactor. The cofactor is [4Fe-4S] cluster.

The protein resides in the cytoplasm. It carries out the reaction epoxyqueuosine(34) in tRNA + AH2 = queuosine(34) in tRNA + A + H2O. It participates in tRNA modification; tRNA-queuosine biosynthesis. In terms of biological role, catalyzes the conversion of epoxyqueuosine (oQ) to queuosine (Q), which is a hypermodified base found in the wobble positions of tRNA(Asp), tRNA(Asn), tRNA(His) and tRNA(Tyr). This is Epoxyqueuosine reductase from Escherichia coli (strain K12).